The primary structure comprises 579 residues: MKTSLLFYRTSKNANKEASVLSYELLEKAGYLFKTSKGIYSYTPLFQRVILKMTEIIREELNAIGGQEVCLPLLQSAELWQKTGRWEAFLSEKLLYVLKDRENKEMCLAPTHEEVVSEFVSQWLTGRKQLPVHLYQIGTKFRDEIRPRFGLMRAKEFLMEDSYTFSDSPEQMEEQYAKLRLAYQRIFDRLNLKYVIVTADGGKIGKGKSEEFHVLCSLGEDTICVSGSYGANIEAAQAIPPSYTYSSELLPMKEVATPNVRTIEDLETFFNTPRQQIIKTLVVKVHKKGSEQFFAICIRGDRQVNLTKVSSFLQADDCELASDEEIIKHLHVEKGFIGPLHCPVPCYADETTRPMTNFICANNQKDIHCRYVNWERDIPLPIFGDFLLAESGDLCPQNNEAPYEIFQGVEVAHIFNLGTRYTECFSVGFQDENGEKQLCWMGTYGIGVGRTLAACIEQLADSKGIVWPLAVAPFSITILYNGGDTEGEAVASQFYQSLNTAGFEPLLDDRNERLGFKLKDSDLLGIPYKLIIGKSFQKTGMLEIESRSGEKYNISPENLLDWCSKNLPCHTRKIPPIRE.

It belongs to the class-II aminoacyl-tRNA synthetase family. ProS type 1 subfamily. In terms of assembly, homodimer.

The protein localises to the cytoplasm. It carries out the reaction tRNA(Pro) + L-proline + ATP = L-prolyl-tRNA(Pro) + AMP + diphosphate. Functionally, catalyzes the attachment of proline to tRNA(Pro) in a two-step reaction: proline is first activated by ATP to form Pro-AMP and then transferred to the acceptor end of tRNA(Pro). As ProRS can inadvertently accommodate and process non-cognate amino acids such as alanine and cysteine, to avoid such errors it has two additional distinct editing activities against alanine. One activity is designated as 'pretransfer' editing and involves the tRNA(Pro)-independent hydrolysis of activated Ala-AMP. The other activity is designated 'posttransfer' editing and involves deacylation of mischarged Ala-tRNA(Pro). The misacylated Cys-tRNA(Pro) is not edited by ProRS. In Chlamydia muridarum (strain MoPn / Nigg), this protein is Proline--tRNA ligase.